A 501-amino-acid polypeptide reads, in one-letter code: Carboxypeptidase 1 (501 aa).

One can recognise a Peptidase M32 domain in the interval 3-496; sequence IHTYEKEFFD…LIDYLSNKYS (494 aa). Positions 234 to 236 match the HPF motif; it reads HPF. The DXRXT motif lies at 244–248; it reads DVRVT. H265 contacts Zn(2+). Residues 265 to 269 carry the HEXXH motif; that stretch reads HECGH. Residue E266 is the Proton donor/acceptor of the active site. Residues H269 and E295 each contribute to the Zn(2+) site. The HES/GQ signature appears at 294 to 297; sequence HESQ. The short motif at 347-352 is the I/NRXXA/SD element; the sequence is IRVEAD. The GXXQDXHW signature appears at 402–409; sequence GILQDVHW.

This sequence belongs to the peptidase M32 family. In terms of assembly, homodimer. Zn(2+) is required as a cofactor.

It catalyses the reaction Release of a C-terminal amino acid with broad specificity, except for -Pro.. Its function is as follows. Broad specificity carboxypetidase that releases amino acids sequentially from the C-terminus, including neutral, aromatic, polar and basic residues. Has lower activity with substrates ending with His or Trp. In Bacillus subtilis (strain 168), this protein is Carboxypeptidase 1 (ypwA).